A 117-amino-acid polypeptide reads, in one-letter code: Large ribosomal subunit protein eL34 (117 aa).

A Phosphoserine modification is found at Ser12. N6-acetyllysine is present on residues Lys36 and Lys43. Lys108 is covalently cross-linked (Glycyl lysine isopeptide (Lys-Gly) (interchain with G-Cter in SUMO2)).

The protein belongs to the eukaryotic ribosomal protein eL34 family. In terms of assembly, component of the large ribosomal subunit.

It localises to the cytoplasm. It is found in the cytosol. The protein localises to the endoplasmic reticulum. Component of the large ribosomal subunit. The ribosome is a large ribonucleoprotein complex responsible for the synthesis of proteins in the cell. This chain is Large ribosomal subunit protein eL34 (RPL34), found in Sus scrofa (Pig).